The chain runs to 309 residues: Tyrosine recombinase XerD (309 aa).

Positions 3–88 constitute a Core-binding (CB) domain; sequence MRASLAIENF…ALRQFFRFLY (86 aa). The 194-residue stretch at 109–302 folds into the Tyr recombinase domain; that stretch reads PLPKIMSVEN…LEERLHKLVS (194 aa). Active-site residues include Arg-158, Lys-182, His-254, Arg-257, and His-280. Tyr-289 (O-(3'-phospho-DNA)-tyrosine intermediate) is an active-site residue.

Belongs to the 'phage' integrase family. XerD subfamily. As to quaternary structure, forms a cyclic heterotetrameric complex composed of two molecules of XerC and two molecules of XerD.

The protein localises to the cytoplasm. Functionally, site-specific tyrosine recombinase, which acts by catalyzing the cutting and rejoining of the recombining DNA molecules. The XerC-XerD complex is essential to convert dimers of the bacterial chromosome into monomers to permit their segregation at cell division. It also contributes to the segregational stability of plasmids. In Brucella suis biovar 1 (strain 1330), this protein is Tyrosine recombinase XerD.